The chain runs to 244 residues: tRNA pseudouridine synthase A (244 aa).

The Nucleophile role is filled by Asp-52. Tyr-110 lines the substrate pocket.

The protein belongs to the tRNA pseudouridine synthase TruA family. In terms of assembly, homodimer.

The catalysed reaction is uridine(38/39/40) in tRNA = pseudouridine(38/39/40) in tRNA. Formation of pseudouridine at positions 38, 39 and 40 in the anticodon stem and loop of transfer RNAs. This chain is tRNA pseudouridine synthase A, found in Finegoldia magna (strain ATCC 29328 / DSM 20472 / WAL 2508) (Peptostreptococcus magnus).